The chain runs to 334 residues: Fructose-1,6-bisphosphatase class 1 (334 aa).

Positions 91, 113, 115, and 116 each coordinate Mg(2+). Residues 116-119 (DGSS), asparagine 208, and lysine 274 each bind substrate. Glutamate 280 provides a ligand contact to Mg(2+).

This sequence belongs to the FBPase class 1 family. Homotetramer. Mg(2+) serves as cofactor.

It is found in the cytoplasm. The enzyme catalyses beta-D-fructose 1,6-bisphosphate + H2O = beta-D-fructose 6-phosphate + phosphate. The protein operates within carbohydrate biosynthesis; gluconeogenesis. The polypeptide is Fructose-1,6-bisphosphatase class 1 (Herminiimonas arsenicoxydans).